The sequence spans 338 residues: Anthocyanidin reductase ((2S)-flavan-3-ol-forming) (338 aa).

Residues Thr-18 to Val-21, Lys-48, Val-87 to Pro-90, and Tyr-168 each bind NADP(+).

It belongs to the NAD(P)-dependent epimerase/dehydratase family. Dihydroflavonol-4-reductase subfamily. In terms of tissue distribution, expressed in seeds, grape skins, flowers and leaves.

The enzyme catalyses a (2S,3R)-flavan-3-ol + 2 NADP(+) = an anthocyanidin with a 3-hydroxy group + 2 NADPH + 2 H(+). The catalysed reaction is a (2S,3S)-flavan-3-ol + 2 NADP(+) = an anthocyanidin with a 3-hydroxy group + 2 NADPH + 2 H(+). The protein operates within secondary metabolite biosynthesis; flavonoid biosynthesis. Its activity is regulated as follows. Inhibited at NaCl concentrations higher than 200 mM. Produces the terminal flavan-3-ol monomers required for the formation of proanthocyanidins or condensed tannins in leaves and flowers, as well as in the skin and seeds of developing berries. Behaves as a reductase and as a C-3 epimerase. Catalyzes the double reduction of anthocyanidins, producing a mixture of (2S,3S)- and (2S,3R)-flavan-3-ols. The enzyme catalyzes sequential hydride transfers to C-2 and C-4, respectively and epimerization at C-3 is achieved by tautomerization that occurs between the two hydride transfers. Converts cyanidin, pelargonidin and delphinidin into catechin and epicatechin, afzelechin and epiafzelechin, and gallocatechin and epigallocatechin respectively. This is Anthocyanidin reductase ((2S)-flavan-3-ol-forming) from Vitis vinifera (Grape).